Reading from the N-terminus, the 74-residue chain is Exodeoxyribonuclease 7 small subunit (74 aa).

Belongs to the XseB family. In terms of assembly, heterooligomer composed of large and small subunits.

The protein localises to the cytoplasm. The catalysed reaction is Exonucleolytic cleavage in either 5'- to 3'- or 3'- to 5'-direction to yield nucleoside 5'-phosphates.. Functionally, bidirectionally degrades single-stranded DNA into large acid-insoluble oligonucleotides, which are then degraded further into small acid-soluble oligonucleotides. The polypeptide is Exodeoxyribonuclease 7 small subunit (Thermotoga neapolitana (strain ATCC 49049 / DSM 4359 / NBRC 107923 / NS-E)).